A 600-amino-acid chain; its full sequence is Pentatricopeptide repeat-containing protein At3g29230 (600 aa).

PPR repeat units follow at residues 50-80, 81-115, 116-150, 151-183, 184-218, 219-245, 246-276, 279-313, 314-348, 349-379, 380-414, 415-445, and 451-481; these read DLHI…VQEP, NVHL…GLFA, DNFT…GLSS, DIYV…MSER, DTVS…DLIS, WNTM…MPER, NTVS…MPLP, NVVT…GLKF, DAAA…NLGS, NAYV…IPKK, DLVS…GIRP, DKVT…MEKV, and QVEH…MPME. Residues 486-561 are type E motif; the sequence is IWGALLGACR…PSGASSVELE (76 aa). The tract at residues 562–592 is type E(+) motif; that stretch reads DGIHEFTVFDKSHPKSDQIYQMLGSLIEPPD.

It belongs to the PPR family. PCMP-E subfamily.

This is Pentatricopeptide repeat-containing protein At3g29230 (PCMP-E27) from Arabidopsis thaliana (Mouse-ear cress).